The sequence spans 291 residues: 4-hydroxy-tetrahydrodipicolinate synthase (291 aa).

T47 contacts pyruvate. The active-site Proton donor/acceptor is the Y134. Residue K162 is the Schiff-base intermediate with substrate of the active site. Position 205 (I205) interacts with pyruvate.

It belongs to the DapA family. As to quaternary structure, homotetramer; dimer of dimers.

It is found in the cytoplasm. It catalyses the reaction L-aspartate 4-semialdehyde + pyruvate = (2S,4S)-4-hydroxy-2,3,4,5-tetrahydrodipicolinate + H2O + H(+). It participates in amino-acid biosynthesis; L-lysine biosynthesis via DAP pathway; (S)-tetrahydrodipicolinate from L-aspartate: step 3/4. Catalyzes the condensation of (S)-aspartate-beta-semialdehyde [(S)-ASA] and pyruvate to 4-hydroxy-tetrahydrodipicolinate (HTPA). The chain is 4-hydroxy-tetrahydrodipicolinate synthase from Methanosphaerula palustris (strain ATCC BAA-1556 / DSM 19958 / E1-9c).